Here is a 705-residue protein sequence, read N- to C-terminus: Catalase C (705 aa).

The tract at residues 1-31 (MAKKPSAPNNTKPATIHDQKATRGNGGELHQ) is disordered. Active-site residues include His-88 and Asn-161. A heme-binding site is contributed by Tyr-375.

The protein belongs to the catalase family. HPII subfamily. The cofactor is heme.

The catalysed reaction is 2 H2O2 = O2 + 2 H2O. Its function is as follows. Decomposes hydrogen peroxide into water and oxygen; serves to protect cells from the toxic effects of hydrogen peroxide. Could protect cells in nodules which have a high potential to produce hydrogen peroxide because of the strong reducing conditions required for nitrogen fixation and the action of several proteins. The protein is Catalase C (katE) of Rhizobium meliloti (strain 1021) (Ensifer meliloti).